The following is a 292-amino-acid chain: GTP cyclohydrolase FolE2 (292 aa).

Belongs to the GTP cyclohydrolase IV family.

It catalyses the reaction GTP + H2O = 7,8-dihydroneopterin 3'-triphosphate + formate + H(+). It participates in cofactor biosynthesis; 7,8-dihydroneopterin triphosphate biosynthesis; 7,8-dihydroneopterin triphosphate from GTP: step 1/1. Functionally, converts GTP to 7,8-dihydroneopterin triphosphate. This is GTP cyclohydrolase FolE2 from Staphylococcus epidermidis (strain ATCC 12228 / FDA PCI 1200).